Consider the following 249-residue polypeptide: Fasciclin-like arabinogalactan protein 12 (249 aa).

The N-terminal stretch at 1-24 (MEHSLIILLFTVLLLLTTTPGILS) is a signal peptide. One can recognise an FAS1 domain in the interval 37-181 (PTNVTKILEK…LAVYQVDKVL (145 aa)). N-linked (GlcNAc...) asparagine glycans are attached at residues Asn39, Asn71, Asn143, Asn152, and Asn159. The tract at residues 186-219 (VFDPRPPAPAPAPSVSKSKKKKDDSDSSSDDSPA) is disordered. Asp220 carries GPI-anchor amidated aspartate lipidation. The propeptide at 221–249 (ASFALRNVGSVCDAVSFCVMSVMLAWFYL) is removed in mature form.

The protein belongs to the fasciclin-like AGP family.

It is found in the cell membrane. May be a cell surface adhesion protein. The protein is Fasciclin-like arabinogalactan protein 12 (FLA12) of Arabidopsis thaliana (Mouse-ear cress).